The primary structure comprises 452 residues: tRNA modification GTPase MnmE (452 aa).

The (6S)-5-formyl-5,6,7,8-tetrahydrofolate site is built by Arg-21, Glu-78, and Lys-118. A TrmE-type G domain is found at Gly-214–Gly-375. Asn-224 is a binding site for K(+). Residues Asn-224–Ser-229, Thr-243–Thr-249, and Asp-268–Gly-271 contribute to the GTP site. A Mg(2+)-binding site is contributed by Ser-228. Thr-243, Ile-245, and Thr-248 together coordinate K(+). Thr-249 lines the Mg(2+) pocket. Lys-452 contributes to the (6S)-5-formyl-5,6,7,8-tetrahydrofolate binding site.

This sequence belongs to the TRAFAC class TrmE-Era-EngA-EngB-Septin-like GTPase superfamily. TrmE GTPase family. As to quaternary structure, homodimer. Heterotetramer of two MnmE and two MnmG subunits. Requires K(+) as cofactor.

Its subcellular location is the cytoplasm. Exhibits a very high intrinsic GTPase hydrolysis rate. Involved in the addition of a carboxymethylaminomethyl (cmnm) group at the wobble position (U34) of certain tRNAs, forming tRNA-cmnm(5)s(2)U34. The protein is tRNA modification GTPase MnmE of Haemophilus influenzae (strain PittEE).